Here is a 146-residue protein sequence, read N- to C-terminus: Hemoglobin subunit beta-1 (146 aa).

The Globin domain occupies 2-146 (EWTDKERAII…VVSALGKQYH (145 aa)). 2 residues coordinate heme b: His63 and His92.

This sequence belongs to the globin family. As to quaternary structure, hb 1 is a heterotetramer of two alpha-1 and two beta-1 chains. In terms of tissue distribution, red blood cells.

Its function is as follows. Involved in oxygen transport from gills to the various peripheral tissues. The polypeptide is Hemoglobin subunit beta-1 (hbb1) (Gobionotothen gibberifrons (Humped rockcod)).